A 412-amino-acid polypeptide reads, in one-letter code: MKMKSLREVDAEIYSLILQEKKRETNKILMIASENYASRAVMEAQGSLFTNKYAEGYPGRRYYGGCEYADEVERLAQERAKQLFNVEHVNVQPHSGTQANMAVYFAMLQPGDTIMGMSLTHGGHLSHGSPVNFTGKLYKTVFYGVNKETGYIDMDEVRRLAQEHKPKIIITGASAYPRTIDFKAFSEIAKEVGAYLMADIAHIAGLIATSMHPSPVPYSDFITTTTHKTLRGPRGGVVMCKAQYAKAIDKTVFPGIQGGPLVHVIAAKAVAFKEALSEDFKEYQKKVIKNAKTLAEALKKKGFKLVSDGTDNHLMLVDLTNFNITGKEAEEALDKAGITVNKNTIPFDTKPPTVTSGIRIGTPSVTTRGMGEEEMEKIAEIIERVIKNISNDSVIKDMQKKVQELCKKFPIY.

Residues L119 and 123–125 (GHL) each bind (6S)-5,6,7,8-tetrahydrofolate. N6-(pyridoxal phosphate)lysine is present on K228.

It belongs to the SHMT family. Homodimer. Requires pyridoxal 5'-phosphate as cofactor.

The protein resides in the cytoplasm. The catalysed reaction is (6R)-5,10-methylene-5,6,7,8-tetrahydrofolate + glycine + H2O = (6S)-5,6,7,8-tetrahydrofolate + L-serine. It participates in one-carbon metabolism; tetrahydrofolate interconversion. The protein operates within amino-acid biosynthesis; glycine biosynthesis; glycine from L-serine: step 1/1. In terms of biological role, catalyzes the reversible interconversion of serine and glycine with tetrahydrofolate (THF) serving as the one-carbon carrier. This reaction serves as the major source of one-carbon groups required for the biosynthesis of purines, thymidylate, methionine, and other important biomolecules. Also exhibits THF-independent aldolase activity toward beta-hydroxyamino acids, producing glycine and aldehydes, via a retro-aldol mechanism. This Thermodesulfovibrio yellowstonii (strain ATCC 51303 / DSM 11347 / YP87) protein is Serine hydroxymethyltransferase.